The primary structure comprises 972 residues: POM121-like protein 2 (972 aa).

Disordered regions lie at residues 1–67, 281–302, 328–359, 406–431, 676–726, and 953–972; these read MGSY…PANP, LKKA…SGQL, TEED…IPEM, GISS…PVTD, LGLS…AIDG, and SKTL…TYKK. Basic residues predominate over residues 40-57; that stretch reads RVQHVHRAQPARRHRPAR. Composition is skewed to polar residues over residues 287 to 302 and 339 to 352; these read SPNS…SGQL and VPSN…TGTA. A compositionally biased stretch (low complexity) spans 413–431; it reads PSIASTQASPSSPTTPVTD. A compositionally biased stretch (polar residues) spans 677 to 696; the sequence is GLSSTNQPPVTSSNSNVTSA. A compositionally biased stretch (low complexity) spans 697–706; sequence LTSSLGSSPK.

Belongs to the POM121 family.

The polypeptide is POM121-like protein 2 (Pom121l2) (Mus musculus (Mouse)).